We begin with the raw amino-acid sequence, 155 residues long: Riboflavin synthase (155 aa).

This sequence belongs to the DMRL synthase family.

The catalysed reaction is 2 6,7-dimethyl-8-(1-D-ribityl)lumazine + H(+) = 5-amino-6-(D-ribitylamino)uracil + riboflavin. Its pathway is cofactor biosynthesis; riboflavin biosynthesis; riboflavin from 2-hydroxy-3-oxobutyl phosphate and 5-amino-6-(D-ribitylamino)uracil: step 2/2. This Aeropyrum pernix (strain ATCC 700893 / DSM 11879 / JCM 9820 / NBRC 100138 / K1) protein is Riboflavin synthase (ribC).